The primary structure comprises 313 residues: Ribosomal RNA small subunit methyltransferase H (313 aa).

S-adenosyl-L-methionine-binding positions include 35–37 (GGH), Asp55, Phe79, Asp101, and Gln108.

This sequence belongs to the methyltransferase superfamily. RsmH family.

Its subcellular location is the cytoplasm. It carries out the reaction cytidine(1402) in 16S rRNA + S-adenosyl-L-methionine = N(4)-methylcytidine(1402) in 16S rRNA + S-adenosyl-L-homocysteine + H(+). Specifically methylates the N4 position of cytidine in position 1402 (C1402) of 16S rRNA. This Salmonella agona (strain SL483) protein is Ribosomal RNA small subunit methyltransferase H.